A 354-amino-acid polypeptide reads, in one-letter code: Protein-glutamate methylesterase/protein-glutamine glutaminase (354 aa).

The region spanning Arg6 to Ala123 is the Response regulatory domain. Asp57 carries the post-translational modification 4-aspartylphosphate. Positions Ala159–Arg351 constitute a CheB-type methylesterase domain. Active-site residues include Ser171, His197, and Asp293.

The protein belongs to the CheB family. Phosphorylated by CheA. Phosphorylation of the N-terminal regulatory domain activates the methylesterase activity.

Its subcellular location is the cytoplasm. The catalysed reaction is [protein]-L-glutamate 5-O-methyl ester + H2O = L-glutamyl-[protein] + methanol + H(+). It catalyses the reaction L-glutaminyl-[protein] + H2O = L-glutamyl-[protein] + NH4(+). In terms of biological role, involved in chemotaxis. Part of a chemotaxis signal transduction system that modulates chemotaxis in response to various stimuli. Catalyzes the demethylation of specific methylglutamate residues introduced into the chemoreceptors (methyl-accepting chemotaxis proteins or MCP) by CheR. Also mediates the irreversible deamidation of specific glutamine residues to glutamic acid. This chain is Protein-glutamate methylesterase/protein-glutamine glutaminase, found in Bdellovibrio bacteriovorus (strain ATCC 15356 / DSM 50701 / NCIMB 9529 / HD100).